A 397-amino-acid chain; its full sequence is (S)-8-oxocitronellyl enol synthase ISY2 (397 aa).

NADP(+) contacts are provided by residues 36 to 38, 64 to 65, 82 to 83, 106 to 107, Gln-144, Tyr-180, Ile-207, and 214 to 216; these read TGL, RR, DV, TW, and SMM. Residue Tyr-180 is part of the active site.

Belongs to the short-chain dehydrogenases/reductases (SDR) family.

It catalyses the reaction (S)-8-oxocitronellyl enol + NADP(+) = (6E)-8-oxogeranial + NADPH + H(+). The enzyme catalyses (S)-8-oxocitronellyl enol + NAD(+) = (6E)-8-oxogeranial + NADH + H(+). Functionally, iridoid synthase that catalyzes the first step in generation of the iridoid ring scaffold using the linear monoterpene (6E)-8-oxogeranial as substrate. Iridoids comprise a large family of distinctive bicyclic monoterpenes that possess a wide range of pharmacological activities, including anticancer, anti-inflammatory, antifungal and antibacterial activities. Catalyzes the conversion of the linear monoterpene (6E)-8-oxogeranial to (S)-8-oxocitronellyl enol, a precursor of nepetalactones, which are metabolites that are both insect-repellent and have euphoric effect in cats. The polypeptide is (S)-8-oxocitronellyl enol synthase ISY2 (Nepeta cataria (Catnip)).